Reading from the N-terminus, the 525-residue chain is Beta-1,4-xylosyltransferase IRX14 (525 aa).

Topologically, residues 1-35 are cytoplasmic; the sequence is MKLSALHQSYLNRRSNSFRSPTSLDSSVDGSGKSL. The helical; Signal-anchor for type II membrane protein transmembrane segment at 36 to 56 threads the bilayer; it reads IAVFWLILHCLCCLISLVLGF. Over 57-525 the chain is Lumenal; that stretch reads RFSRLVFFFL…SSSSKHQERN (469 aa). Residues Asn-102, Asn-204, and Asn-326 are each glycosylated (N-linked (GlcNAc...) asparagine). The disordered stretch occupies residues 452–525; sequence RTPWPDVPPE…SSSSKHQERN (74 aa). Residues 471–488 are compositionally biased toward polar residues; the sequence is PLSQGNTVVVIPKQQQHP. The span at 489–503 shows a compositional bias: basic residues; the sequence is TKIRKPKRKSKKSKH. Residues 508 to 519 show a composition bias toward polar residues; sequence TDTTTQVYSSSS.

Belongs to the glycosyltransferase 43 family. Expressed in developing interfascicular fibers and xylem cells in stems and developing secondary xylem in roots.

Its subcellular location is the golgi apparatus membrane. It carries out the reaction [(1-&gt;4)-beta-D-xylan](n) + UDP-alpha-D-xylose = [(1-&gt;4)-beta-D-xylan](n+1) + UDP + H(+). In terms of biological role, involved in the synthesis of the hemicellulose glucuronoxylan, a major component of secondary cell walls. Involved in the elongation of glucuronoxylan xylosyl backbone. Xylan xylosyltransferase that acts cooperatively with IRX9 to achieve the successive addition of xylosyl residues during xylan backbone elongation. Required for the proper composition and structural properties of released seed coat mucilage. Required for the production of highly branched xylan polymers in seed coat mucilage. Xylan with xylose side chains seems to be necessary for pectin attachment to the seed surface. Together with MUCI70, required for xylan and pectin synthesis in seed coat epidermal (SCE) cells. In Arabidopsis thaliana (Mouse-ear cress), this protein is Beta-1,4-xylosyltransferase IRX14.